We begin with the raw amino-acid sequence, 292 residues long: Ribosomal protein L11 methyltransferase (292 aa).

S-adenosyl-L-methionine contacts are provided by Thr-144, Gly-165, Asp-187, and Asn-229.

This sequence belongs to the methyltransferase superfamily. PrmA family.

It is found in the cytoplasm. The catalysed reaction is L-lysyl-[protein] + 3 S-adenosyl-L-methionine = N(6),N(6),N(6)-trimethyl-L-lysyl-[protein] + 3 S-adenosyl-L-homocysteine + 3 H(+). Its function is as follows. Methylates ribosomal protein L11. The polypeptide is Ribosomal protein L11 methyltransferase (Pseudomonas syringae pv. tomato (strain ATCC BAA-871 / DC3000)).